Consider the following 577-residue polypeptide: General transcription factor IIF subunit 1 (577 aa).

The interval 1-36 (MSSASKSTPSAASGSSTSAAAAAAASVASGSASSSA) is disordered. Ser-183, Ser-246, Ser-250, and Ser-252 each carry phosphoserine. Positions 236-508 (KITDMDEWID…TSLPTSFSGG (273 aa)) are disordered. Positions 240 to 256 (MDEWIDSEDESDSEDEE) are enriched in acidic residues. Over residues 257-271 (DKKKKEQEDSDDGKA) the composition is skewed to basic and acidic residues. Residues 272–285 (KGKGKKGADKKKKK) are compositionally biased toward basic residues. Residues 289-304 (DDEAFEESDDGDEEGR) show a composition bias toward acidic residues. Positions 319–341 (PEAKVDKDMKGVAEEDALRKLLT) are enriched in basic and acidic residues. Thr-341 carries the post-translational modification Phosphothreonine. Phosphoserine is present on residues Ser-342, Ser-352, and Ser-355. Residues 362 to 376 (GEKKKKDKGKDEVSK) show a composition bias toward basic and acidic residues. Over residues 392–406 (SNGSGDSSTDFSSDS) the composition is skewed to low complexity. The segment covering 423–437 (VVKDKDKEKEKEKES) has biased composition (basic and acidic residues). The segment covering 438 to 456 (AASSKVIASSSNANKSRSA) has biased composition (low complexity). Phosphoserine is present on residues Ser-453 and Ser-455. A Phosphothreonine modification is found at Thr-457. Polar residues-rich tracts occupy residues 471–489 (SLPS…TSTP) and 496–506 (EISTSLPTSFS). Phosphoserine occurs at positions 482 and 484. Residue Thr-488 is modified to Phosphothreonine.

It belongs to the TFIIF alpha subunit family. In terms of assembly, heterodimer of an alpha and a beta subunit. Post-translationally, phosphorylated on Ser and other residues by TAF1 and casein kinase II-like kinases.

It localises to the nucleus. TFIIF is a general transcription initiation factor that binds to RNA polymerase II and helps to recruit it to the initiation complex in collaboration with TFIIB. It promotes transcription elongation. This is General transcription factor IIF subunit 1 from Drosophila melanogaster (Fruit fly).